The chain runs to 908 residues: Transferrin-binding protein A (908 aa).

A signal peptide spans 1 to 24 (MQQQHLFRLNILCLSLMTALPVYA). The short motif at 38–45 (DTIQVKAK) is the TonB box element. A TBDR plug domain is found at 51-176 (RDNEVTGLGK…LAGSVAFQTK (126 aa)). The TBDR beta-barrel domain maps to 187-908 (QWGIQSKTAY…NYTFSLEMKF (722 aa)). The TonB C-terminal box motif lies at 891 to 908 (NRYAAPGRNYTFSLEMKF).

It belongs to the TonB-dependent receptor family. Binds both human apo- and holo-transferrin (TF), via the TF C-terminus. Forms a large complex with TF and TbpB.

The protein resides in the cell outer membrane. In terms of biological role, neisseria acquires iron by extracting it from serum transferrin (TF) in its human host. Acts as a TF receptor and is required for TF utilization. Binds both apo- and holo-TF, via the TF C-terminus. The protein is Transferrin-binding protein A of Neisseria meningitidis serogroup B.